A 117-amino-acid chain; its full sequence is Large ribosomal subunit protein bL20c (117 aa).

It belongs to the bacterial ribosomal protein bL20 family.

It is found in the plastid. Its subcellular location is the chloroplast. Functionally, binds directly to 23S ribosomal RNA and is necessary for the in vitro assembly process of the 50S ribosomal subunit. It is not involved in the protein synthesizing functions of that subunit. This is Large ribosomal subunit protein bL20c (rpl20) from Arabidopsis thaliana (Mouse-ear cress).